A 75-amino-acid chain; its full sequence is UPF0352 protein PMI0824 (75 aa).

The protein belongs to the UPF0352 family.

This Proteus mirabilis (strain HI4320) protein is UPF0352 protein PMI0824.